A 140-amino-acid polypeptide reads, in one-letter code: 3-hydroxyacyl-[acyl-carrier-protein] dehydratase FabZ (140 aa).

Residue histidine 47 is part of the active site.

Belongs to the thioester dehydratase family. FabZ subfamily.

Its subcellular location is the cytoplasm. It carries out the reaction a (3R)-hydroxyacyl-[ACP] = a (2E)-enoyl-[ACP] + H2O. Involved in unsaturated fatty acids biosynthesis. Catalyzes the dehydration of short chain beta-hydroxyacyl-ACPs and long chain saturated and unsaturated beta-hydroxyacyl-ACPs. The protein is 3-hydroxyacyl-[acyl-carrier-protein] dehydratase FabZ of Streptococcus suis (strain 98HAH33).